A 403-amino-acid chain; its full sequence is MRLSRLLIGASLGVALSSTAFTAALADVKFGSLYPISGSLALLGEESARGLELAVDEVNAAGGIKGEKVVLERGDAVDNNQATGEARRLISLVGVKAIFGTYSSARVIAASQVSELAGIPYFEMGAVADEVTGRGLQYLFRTNPTAENMAKDSVDMLIKGIAPGLGKDPKDMKIGIIYEDSSYGTSVAGHQEDNAKAAGLTVVLKSGYPSNTVDMSSLVLELREKGADVVMQTSYQNDSVLFLQQANEAGYKPLAIIGGGGGYSMQPTADAVGHDLIDGVFDADYTQYAVNTSATPGLTEFVEAYKAKYGSQPRSGHSLTNYVGAKAIFQALNAGEGFEPDQIVSAVKALDIPDGQTAAGYGVKFGKNNQNERATMMGMQWQDGKLVTVYPENAAIAKMRFKK.

Residues 1-26 (MRLSRLLIGASLGVALSSTAFTAALA) form the signal peptide.

This sequence belongs to the leucine-binding protein family.

Functionally, component of an amino-acid transport system. The chain is Leu/Ile/Val-binding protein homolog 8 from Brucella suis biovar 1 (strain 1330).